The following is a 438-amino-acid chain: GTPase Obg (438 aa).

Residues 2–160 (SMFLDQVTID…RKIELELKVL (159 aa)) form the Obg domain. Positions 128–147 (NIRFASPRNPAPEIAENGEP) are disordered. Positions 161–339 (ADVGLVGFPS…LLNATADLLE (179 aa)) constitute an OBG-type G domain. GTP contacts are provided by residues 167-174 (GFPSVGKS), 192-196 (FTTLV), 214-217 (DLPG), 284-287 (NKMD), and 320-322 (SGV). Residues Ser-174 and Thr-194 each coordinate Mg(2+). The OCT domain maps to 360–438 (GFQPEGPEFT…IGNFEFEFVE (79 aa)).

This sequence belongs to the TRAFAC class OBG-HflX-like GTPase superfamily. OBG GTPase family. Monomer. Mg(2+) is required as a cofactor.

The protein localises to the cytoplasm. Functionally, an essential GTPase which binds GTP, GDP and possibly (p)ppGpp with moderate affinity, with high nucleotide exchange rates and a fairly low GTP hydrolysis rate. Plays a role in control of the cell cycle, stress response, ribosome biogenesis and in those bacteria that undergo differentiation, in morphogenesis control. This chain is GTPase Obg, found in Enterococcus faecalis (strain ATCC 700802 / V583).